Reading from the N-terminus, the 113-residue chain is U11-theraphotoxin-Hhn1p (113 aa).

The signal sequence occupies residues 1-21; the sequence is MNTVRVTFLLVFVLAVSLGQA. The propeptide occupies 22–74; that stretch reads DKDENRMEMQEKTEQGKSYLDFAENLLLQKLEELEAKLLEEDSEESRNSRQKR. The interval 61–83 is disordered; that stretch reads EEDSEESRNSRQKRCIGEGVPCD. Intrachain disulfides connect Cys-75/Cys-90, Cys-82/Cys-95, and Cys-89/Cys-110.

The protein belongs to the neurotoxin 14 (magi-1) family. 01 (HNTX-16) subfamily. In terms of tissue distribution, expressed by the venom gland.

Its subcellular location is the secreted. Its function is as follows. Probable ion channel inhibitor. The sequence is that of U11-theraphotoxin-Hhn1p from Cyriopagopus hainanus (Chinese bird spider).